Consider the following 275-residue polypeptide: Autophagy-related protein 5 (275 aa).

Lys129 is covalently cross-linked (Glycyl lysine isopeptide (Lys-Gly) (interchain with G-Cter in lgg-3/ATG12)). Low complexity predominate over residues 221–231 (LSSSSSSSTDS). A disordered region spans residues 221–241 (LSSSSSSSTDSQSEHPPRLIS).

The protein belongs to the ATG5 family. As to quaternary structure, most likely a component of a complex at least containing atg-5, lgg-3/ATG12, atg-16.1 and/or atg-16.2. Interacts with lgg-3/ATG12. Interacts with atg-16.1 (via N-terminus) and atg-16.2 (via N-terminus). Conjugated to lgg-3/ATG12; which is essential for autophagy.

The protein resides in the preautophagosomal structure membrane. Functionally, involved in autophagic vesicle formation. Conjugation with lgg-3/ATG12, through a ubiquitin-like conjugating system involving atg-7 as an E1-like activating enzyme and atg-10 as an E2-like conjugating enzyme, is essential for its function. Most likely a component of an atg-5-lgg-3-atg-16 complex that promotes autophagosome formation by associating with lgg-2, but not lgg-1, at the preautophagosomal membrane. Probably, as part of an atg-5-lgg-3-atg-16 complex, required for lgg-1 lipidation; the complex acts as an E3-like enzyme promoting atg-3-mediated lgg-1 lipidation. Furthermore, association with atg-16.2 is required for the nucleation of lgg-1 positive autophagic vesicles. The protein is Autophagy-related protein 5 of Caenorhabditis elegans.